A 187-amino-acid polypeptide reads, in one-letter code: Adenine phosphoribosyltransferase (187 aa).

This sequence belongs to the purine/pyrimidine phosphoribosyltransferase family. In terms of assembly, homodimer.

The protein localises to the cytoplasm. The enzyme catalyses AMP + diphosphate = 5-phospho-alpha-D-ribose 1-diphosphate + adenine. It participates in purine metabolism; AMP biosynthesis via salvage pathway; AMP from adenine: step 1/1. Functionally, catalyzes a salvage reaction resulting in the formation of AMP, that is energically less costly than de novo synthesis. In Burkholderia pseudomallei (strain 1106a), this protein is Adenine phosphoribosyltransferase.